A 348-amino-acid chain; its full sequence is Nicotinate-nucleotide--dimethylbenzimidazole phosphoribosyltransferase (348 aa).

Residue glutamate 317 is the Proton acceptor of the active site.

The protein belongs to the CobT family.

It catalyses the reaction 5,6-dimethylbenzimidazole + nicotinate beta-D-ribonucleotide = alpha-ribazole 5'-phosphate + nicotinate + H(+). It functions in the pathway nucleoside biosynthesis; alpha-ribazole biosynthesis; alpha-ribazole from 5,6-dimethylbenzimidazole: step 1/2. Its function is as follows. Catalyzes the synthesis of alpha-ribazole-5'-phosphate from nicotinate mononucleotide (NAMN) and 5,6-dimethylbenzimidazole (DMB). This is Nicotinate-nucleotide--dimethylbenzimidazole phosphoribosyltransferase from Clostridioides difficile (strain 630) (Peptoclostridium difficile).